A 234-amino-acid chain; its full sequence is MTKISKRMKSLSAKVEDKSYAPLEAIQLVKENANAKFDETIEAHIRLGIDPKYTDQQIRTTVSLPKGTGQKVRIAVIAKGEKVAEANSAGADLAGEEELIDSISKGEMNFDLLISTPDMMPKVAKLGRVLGPRGLMPNPKAGTVTTDLISSIKEFKAGKLEFRADRAGIVHVRFGKASFSPEDLLENLKVLHEAIDRNKPSGAKGRYWKSLYITSTMGPSVEIDIAALQDSKEE.

Belongs to the universal ribosomal protein uL1 family. In terms of assembly, part of the 50S ribosomal subunit.

Binds directly to 23S rRNA. The L1 stalk is quite mobile in the ribosome, and is involved in E site tRNA release. Its function is as follows. Protein L1 is also a translational repressor protein, it controls the translation of the L11 operon by binding to its mRNA. The polypeptide is Large ribosomal subunit protein uL1 (Prochlorococcus marinus (strain SARG / CCMP1375 / SS120)).